The primary structure comprises 380 residues: L-lactate dehydrogenase (380 aa).

Residues M1–R380 form the FMN hydroxy acid dehydrogenase domain. Residue Y24 coordinates substrate. The FMN site is built by S106 and Q127. Y129 is a substrate binding site. An FMN-binding site is contributed by T155. Substrate is bound at residue R164. K251 provides a ligand contact to FMN. H275 serves as the catalytic Proton acceptor. R278 lines the substrate pocket. D306–R330 serves as a coordination point for FMN.

It belongs to the FMN-dependent alpha-hydroxy acid dehydrogenase family. Requires FMN as cofactor.

It localises to the cell inner membrane. It catalyses the reaction (S)-lactate + A = pyruvate + AH2. Functionally, catalyzes the conversion of L-lactate to pyruvate. Is coupled to the respiratory chain. The protein is L-lactate dehydrogenase of Caulobacter sp. (strain K31).